A 307-amino-acid chain; its full sequence is Undecaprenyl-diphosphatase 2 (307 aa).

A run of 8 helical transmembrane segments spans residues 19–41 (GVTEFLPVSSTGHMIILGSIIGF), 56–76 (IHMFEIIIQLGAILAIVVLYW), 117–137 (FKFWTNIVVACIPAIVIGLPF), 144–164 (LLFFPAPVAAALMVGAVWMIF), 208–228 (IIGAWIVGVATVAGAEFSFFL), 229–249 (AIPMMLGASLLFLIKNSVVLS), 251–271 (VQILGLAVGFIVAFIVALVVV), and 285–305 (IFAVYRLAIGIIVLVLGFTKV).

The protein belongs to the UppP family.

The protein localises to the cell membrane. The enzyme catalyses di-trans,octa-cis-undecaprenyl diphosphate + H2O = di-trans,octa-cis-undecaprenyl phosphate + phosphate + H(+). In terms of biological role, catalyzes the dephosphorylation of undecaprenyl diphosphate (UPP). Confers resistance to bacitracin. This chain is Undecaprenyl-diphosphatase 2, found in Clostridium acetobutylicum (strain ATCC 824 / DSM 792 / JCM 1419 / IAM 19013 / LMG 5710 / NBRC 13948 / NRRL B-527 / VKM B-1787 / 2291 / W).